The following is a 430-amino-acid chain: ATP-dependent RNA helicase RhlB (430 aa).

The short motif at 9-37 (QKFSDFALHPQVIEALESKGFHYCTPIQA) is the Q motif element. One can recognise a Helicase ATP-binding domain in the interval 40 to 219 (LPLTLSGRDV…FEQMNNAEYV (180 aa)). Position 53–60 (53–60 (AQTGTGKT)) interacts with ATP. Residues 165 to 168 (DEAD) carry the DEAD box motif. The Helicase C-terminal domain maps to 245 to 390 (RLLQTLLEEE…LSKYNSDALM (146 aa)). The disordered stretch occupies residues 392 to 430 (DLPAPKRLTRPPRSNNGPRRHNSAPRRSGAPRNNRKRAD).

This sequence belongs to the DEAD box helicase family. RhlB subfamily. Component of the RNA degradosome, which is a multiprotein complex involved in RNA processing and mRNA degradation.

The protein resides in the cytoplasm. The catalysed reaction is ATP + H2O = ADP + phosphate + H(+). Its function is as follows. DEAD-box RNA helicase involved in RNA degradation. Has RNA-dependent ATPase activity and unwinds double-stranded RNA. The polypeptide is ATP-dependent RNA helicase RhlB (Pectobacterium atrosepticum (strain SCRI 1043 / ATCC BAA-672) (Erwinia carotovora subsp. atroseptica)).